A 947-amino-acid chain; its full sequence is MEWKDTLNLPKTAFPMKGNLPNKEPEIIKKWEEIDLYKRLREERKGKEKYILHDGPPYANGNIHLGHALNKILKDILVKYESMKGKDAPFVPGWDCHGLPIEQQVEKLLKKEKKRKEDLSKSEFRKLCREYALKYVNIQREEFKRLGIIGNWEKPYLTMRPSYQAQEIRELGKIFRKGIAYRGKKPVYWCIYDKTAEAEAEVEYKEKKDPSIYVAFELVESPFDIKEKVYAVIWTTTPWTLPANLGIMVNPDFDYLFLRSEDKVYIVAKDLLESFSEKTGIEGEVIKEVKGRELEFLEYRHPFIDRVSKIYLSEFVELGTGTGLVHMAPGHGQEDYIIGQRYGVEAFAPVDDEGRFTDEAPEFIQGLRVFEANERIVEKLRENGVLLHHETVKHSYPHCWRCKNPVIFRATPQWFISMDGITEKGETLRGEALKEIERVKWIPHWGENRIKSMIENRPDWCISRQRSWGVPIAVFYCKRCGNIIDDEKVFEHIADLVEKDEFGADIWFEREAEELLPEGYRCPKCDGEEFKKEEDILDVWFDSGVSHASVLKSGFWDELKWPADMYLEGSDQHRGWFQSSLLEGVASYGRAPYDAVLTHGFILDEKGNKMSKSLGNVIPPEKIIKMYGADILRLWVVSEDYTEDIKIGMNLLKSIADDYRKIRNTFRYFLGNLYDFDANKDRVPYENLLEIDRWMLSKLQRLIDRSHSAYSNYRFHKIYHEIKRFVIVDLSAVYLDILKDRLYVYAPDSLERRSAQTVLYELLDSLTKLLAPILSFTTEEIWGYVREINPSVKESIHLEEMPVVNQDYIDPELEETYEKLMKVRDDILKALEEARRSDIIRHPYEAKVVLSLPDEYRSVVEKRIDWIKFFFTVSQVELSDQAEGDVIIGGEKVEGGKIAVKKASGEKCPRCWIYDESVGKDGQPVCDRCMEQLERMEIKISDIEEAK.

The 'HIGH' region signature appears at 57–67; it reads PYANGNIHLGH. Residue Glu-568 participates in L-isoleucyl-5'-AMP binding. The 'KMSKS' region signature appears at 609–613; that stretch reads KMSKS. Lys-612 provides a ligand contact to ATP. 4 residues coordinate Zn(2+): Cys-908, Cys-911, Cys-926, and Cys-929.

The protein belongs to the class-I aminoacyl-tRNA synthetase family. IleS type 1 subfamily. In terms of assembly, monomer. The cofactor is Zn(2+).

The protein localises to the cytoplasm. It carries out the reaction tRNA(Ile) + L-isoleucine + ATP = L-isoleucyl-tRNA(Ile) + AMP + diphosphate. Its function is as follows. Catalyzes the attachment of isoleucine to tRNA(Ile). As IleRS can inadvertently accommodate and process structurally similar amino acids such as valine, to avoid such errors it has two additional distinct tRNA(Ile)-dependent editing activities. One activity is designated as 'pretransfer' editing and involves the hydrolysis of activated Val-AMP. The other activity is designated 'posttransfer' editing and involves deacylation of mischarged Val-tRNA(Ile). This chain is Isoleucine--tRNA ligase, found in Persephonella marina (strain DSM 14350 / EX-H1).